Here is a 488-residue protein sequence, read N- to C-terminus: Proline--tRNA ligase (488 aa).

This sequence belongs to the class-II aminoacyl-tRNA synthetase family. ProS type 3 subfamily. In terms of assembly, homodimer.

The protein localises to the cytoplasm. The catalysed reaction is tRNA(Pro) + L-proline + ATP = L-prolyl-tRNA(Pro) + AMP + diphosphate. Its function is as follows. Catalyzes the attachment of proline to tRNA(Pro) in a two-step reaction: proline is first activated by ATP to form Pro-AMP and then transferred to the acceptor end of tRNA(Pro). This chain is Proline--tRNA ligase, found in Symbiobacterium thermophilum (strain DSM 24528 / JCM 14929 / IAM 14863 / T).